The sequence spans 414 residues: 2,3-diketo-5-methylthiopentyl-1-phosphate enolase (414 aa).

Lys-99 serves as the catalytic Proton acceptor. Residues Lys-148, Lys-174–Glu-177, His-265, Gly-338, and Gly-360–Gly-361 contribute to the substrate site. The Mg(2+) site is built by Lys-174, Asp-176, and Glu-177. Lys-174 carries the post-translational modification N6-carboxylysine.

It belongs to the RuBisCO large chain family. Type IV subfamily. In terms of assembly, homodimer. Mg(2+) is required as a cofactor.

It carries out the reaction 5-methylsulfanyl-2,3-dioxopentyl phosphate = 2-hydroxy-5-methylsulfanyl-3-oxopent-1-enyl phosphate. Its pathway is amino-acid biosynthesis; L-methionine biosynthesis via salvage pathway; L-methionine from S-methyl-5-thio-alpha-D-ribose 1-phosphate: step 3/6. Its function is as follows. Catalyzes the enolization of 2,3-diketo-5-methylthiopentyl-1-phosphate (DK-MTP-1-P) into 2-hydroxy-3-keto-5-methylthiopentenyl-1-phosphate (HK-MTPenyl-1-P). This Bacillus cereus (strain B4264) protein is 2,3-diketo-5-methylthiopentyl-1-phosphate enolase.